A 953-amino-acid polypeptide reads, in one-letter code: MKISELSPEYRQPPPHAGLIADLSKAVSDVESFAASATAPEKLAADLRRILTSLASAASSSSFTESLSVQIWRLGTRLWNAVVDRANSAALAGGPAALAVEAEIRQAAPELLLLAGIPNGVPSAAAKVASFFHRSGLAWLDLGRVDLASACFEKATPLVSAAATEDRGVLLELNLARARAASDAGDQALAVALLSRSKPLAAASPEGAKSLAQGYLSIGEATLAAKHSNPAVEASTLFTEALDLCEKAASPSSSSPRTPPYGGATPKTPNLEGLKRRCLRFLALERLQAQDYEGVLRCIRVSRASMGLEEEHPSIGVMAMRAWIGSGNMAEADKELERLMANALATENLCVSAAEAYLAAAGPEAARKVLIALAARCRAGGAAAAVRVVKQVIDGGGGGIGRARAIAELVSDERVVALFDGPGNTHERGTMHALLWNCGTEHFRAKNYDTSADLIERSMLYVSRDEESRSRRADCFRVLSICHIALQHLDRALEFVNEAYKVEPNIKCAFLKVKINLQKGEEDEAFKQMKTMVGCVDFNPEFLTLTAHEAMSCKSFGVAVASLSYLLGLYSAERPMPMPEVAVLRNLIELLSREPGTEAEILKYSRRAKQRMADLGVESFFGSGIVGGRELNWFADLSWNMGLRASKEKKYNFGSEFFELAAEFFSSRNAECDENRSKVCKALIMAVTIMLNAEELNNSPLSDSDIKKGVEMLSRAGKLLPLISPSVPVASDQLEANNFLYLHTFNSYQLMGRMGTPAHPQQLQLIKNFASSKACTPANLLTLGVTASKGALPNMLAAEFSLKACITTALASQSPNYRVISCALRKLACLAGLQDLNGSKSDAAYDVFQQAYQIVVGLKEGEYPVEEGQWLVATAWNMSCLPLRLHQAKVARKWMKMGLDLARHLEGMKERIASMQTTFENLERVSGDEPDECSQEEAPKASISGSMSQPVLV.

Residues 129–162 form a TPR 1 repeat; sequence ASFFHRSGLAWLDLGRVDLASACFEKATPLVSAA. The interval 248-269 is disordered; that stretch reads AASPSSSSPRTPPYGGATPKTP. 2 TPR repeats span residues 432–465 and 473–506; these read HALL…VSRD and ADCF…EPNI. The disordered stretch occupies residues 924-953; sequence RVSGDEPDECSQEEAPKASISGSMSQPVLV. Over residues 943–953 the composition is skewed to polar residues; sequence ISGSMSQPVLV.

It is found in the nucleus. Its subcellular location is the chromosome. In terms of biological role, required for crossover formation, complete synapsis of homologous chromosomes and bivalent formation during meiosis. Is specific to recombination events resulting in interference-sensitive crossovers (class I meiotic crossover) and works cooperatively with MER3 to promote crossovers. The polypeptide is TPR repeat-containing protein ZIP4 (Oryza sativa subsp. indica (Rice)).